The sequence spans 498 residues: MKINPTTSVPGVSTLEKENLGRISQIIGPVLDVAFPPGKMPNIYNALVVKGQDTAGQQINVTCEVQQLLGNNRVRAVAMSATDGLTRGMEVIDTGAALSVPVGGATLGRIFNVLGEPVDNLGPVDTRTTSPIHKSAPAFIQLDTKLSIFETGIKVVDLLAPYRRGGKIGLFGGAGVGKTVLIMELINNIAKAHGGVSVFGGVGERTREGNDLYMEMKESGVINEQNLAESKVALVYGQMNEPPGARMRVGLTALTMAEYFRDVNEQDVLLFIDNIFRFVQAGSEVSALLGRMPSAVGYQPTLSTEMGTLQERITSTKEGSITSIQAVYVPADDLTDPAPATTFAHLDATTVLSRGLAAKGIYPAVDPLDSTSTMLQPRIVGEEHYETAQRVKQTLQRYKELQDIIAILGLDELSEEDRLTVARARKIERFLSQPFFVAEVFTGSPGKYVGLAETIRGFKLILSGELDGLPEQAFYLVGNIDEATAKATNLEMESKLKK.

Residue 172–179 coordinates ATP; it reads GGAGVGKT.

Belongs to the ATPase alpha/beta chains family. As to quaternary structure, F-type ATPases have 2 components, CF(1) - the catalytic core - and CF(0) - the membrane proton channel. CF(1) has five subunits: alpha(3), beta(3), gamma(1), delta(1), epsilon(1). CF(0) has four main subunits: a(1), b(1), b'(1) and c(9-12).

Its subcellular location is the plastid. The protein resides in the chloroplast thylakoid membrane. The catalysed reaction is ATP + H2O + 4 H(+)(in) = ADP + phosphate + 5 H(+)(out). In terms of biological role, produces ATP from ADP in the presence of a proton gradient across the membrane. The catalytic sites are hosted primarily by the beta subunits. The sequence is that of ATP synthase subunit beta, chloroplastic from Gossypium hirsutum (Upland cotton).